Reading from the N-terminus, the 418-residue chain is MHPRRPEGFDGLGYRGGVRDDPAFGGPFHARSFGSGTELGHWVTTPPDIPGSRNLHWGEKSPSYGVPSAPPTLEGPAEEPFPGGGDGPRPGRSSEQLNRFAGFGIGLASLFTENVLAHPCIVLRRQCQVNYHARHYHLTPFSVINIMYSFNKTQGPRALWKGMGSTFIVQGVTLGAEGIISEFTPLPREVSQKWNPKQIGEHLLLKCLTYMVAMPFYSASLIETVQSEIIRDNTGILECVKEGIGRVIGLGVPHSKRLLPLFSLIFPTVLHGVLHYIISSIIQKIVLLILKRKTCSSHLAESTSPMQNMLDAYFPELIANFAASLCSDVILYPLETVLHRLHIQGTRTIIDNTDLGYEVLPINTQYEGMRDCVNTIKQEEGVFGFYKGFGAVIIQYTLHATILQITKIIYSTLLQNSI.

Phosphoserine occurs at positions 32 and 35. A Phosphothreonine modification is found at Thr-45. The tract at residues Pro-46–Gln-96 is disordered. Residues Gln-96–Pro-187 form a Solcar 1 repeat. The next 6 membrane-spanning stretches (helical) occupy residues Phe-103–Leu-123, Phe-167–Pro-187, His-202–Ile-222, Leu-258–Ile-278, Phe-314–Leu-334, and Val-382–Ile-402. Residues Asp-311–Asn-416 form a Solcar 2 repeat.

This sequence belongs to the mitochondrial carrier (TC 2.A.29) family. In terms of assembly, associates with the mitochondrial contact site and cristae organizing system (MICOS) complex. May associate with the endoplasmic reticulum membrane protein complex (EMC). Widely expressed. Highly expressed in hindbrain, spinal cord and brain coronal sections containing corpus callosum, fornix, optic chiasm, thalamus, hypothalamus, midbrain, pons and cerebellum.

The protein resides in the mitochondrion outer membrane. Transmembrane protein of the mitochondrial outer membrane that controls mitochondrial organization. May regulate the assembly of the MICOS (mitochondrial contact site and cristae organizing system) complex which is essential to the biogenesis and dynamics of mitochondrial cristae, the inwards folds of the inner mitochondrial membrane. Through its interaction with the EMC (endoplasmic reticulum membrane protein complex), could regulate mitochondrial lipid homeostasis and thereby mitochondrial fission. The sequence is that of Mitochondrial outer membrane protein SLC25A46 from Rattus norvegicus (Rat).